Reading from the N-terminus, the 119-residue chain is ATP-dependent Clp protease adapter protein ClpS (119 aa).

The protein belongs to the ClpS family. As to quaternary structure, binds to the N-terminal domain of the chaperone ClpA.

Its function is as follows. Involved in the modulation of the specificity of the ClpAP-mediated ATP-dependent protein degradation. This Marinobacter nauticus (strain ATCC 700491 / DSM 11845 / VT8) (Marinobacter aquaeolei) protein is ATP-dependent Clp protease adapter protein ClpS.